The sequence spans 182 residues: Transcription termination/antitermination protein NusG (182 aa).

The protein belongs to the NusG family.

In terms of biological role, participates in transcription elongation, termination and antitermination. In Chlamydia pneumoniae (Chlamydophila pneumoniae), this protein is Transcription termination/antitermination protein NusG.